A 339-amino-acid chain; its full sequence is Very-long-chain 3-oxoacyl-CoA reductase (339 aa).

A helical transmembrane segment spans residues 19–39 (VALFLLSIGGLFTACKLFSFC). Residues L64, K105, D119, D127, N146, Y213, K217, V246, and S248 each coordinate NADP(+). Y213 functions as the Proton donor in the catalytic mechanism. K217 (lowers pKa of active site Tyr) is an active-site residue.

The protein belongs to the short-chain dehydrogenases/reductases (SDR) family.

Its subcellular location is the endoplasmic reticulum membrane. It carries out the reaction a very-long-chain (3R)-3-hydroxyacyl-CoA + NADP(+) = a very-long-chain 3-oxoacyl-CoA + NADPH + H(+). It participates in lipid metabolism; fatty acid biosynthesis. In terms of biological role, component of the microsomal membrane bound fatty acid elongation system, which produces the 26-carbon very long-chain fatty acids (VLCFA) from palmitate. Catalyzes the reduction of the 3-ketoacyl-CoA intermediate that is formed in each cycle of fatty acid elongation. VLCFAs serve as precursors for ceramide and sphingolipids. In Ajellomyces capsulatus (strain NAm1 / WU24) (Darling's disease fungus), this protein is Very-long-chain 3-oxoacyl-CoA reductase.